The chain runs to 384 residues: L-lactate dehydrogenase (384 aa).

Positions 1–380 (MIISSSNDYR…NESCLVEMNK (380 aa)) constitute an FMN hydroxy acid dehydrogenase domain. Position 24 (tyrosine 24) interacts with substrate. Serine 106 and glutamine 127 together coordinate FMN. Tyrosine 129 contacts substrate. Threonine 155 serves as a coordination point for FMN. Arginine 164 serves as a coordination point for substrate. FMN is bound at residue lysine 251. Histidine 275 serves as the catalytic Proton acceptor. Residue arginine 278 coordinates substrate. FMN is bound at residue 306–330 (DSGIRNGLDVVRMLALGADSVMLGR).

Belongs to the FMN-dependent alpha-hydroxy acid dehydrogenase family. It depends on FMN as a cofactor.

The protein resides in the cell inner membrane. It carries out the reaction (S)-lactate + A = pyruvate + AH2. In terms of biological role, catalyzes the conversion of L-lactate to pyruvate. Is coupled to the respiratory chain. This Acinetobacter baylyi (strain ATCC 33305 / BD413 / ADP1) protein is L-lactate dehydrogenase.